Here is a 151-residue protein sequence, read N- to C-terminus: Regulatory protein RecX (151 aa).

This sequence belongs to the RecX family.

It localises to the cytoplasm. Modulates RecA activity. This is Regulatory protein RecX from Prosthecochloris aestuarii (strain DSM 271 / SK 413).